The primary structure comprises 642 residues: Probable glutamate--tRNA ligase, cytoplasmic (642 aa).

An L-glutamate-binding site is contributed by 152–154 (RFP). Residues 157-166 (PNGRLHIGHA) carry the 'HIGH' region motif. Histidine 162 contacts ATP. L-glutamate-binding positions include aspartate 188, 326-330 (YDFAC), and arginine 344. ATP contacts are provided by residues glutamate 347 and 382-386 (VLSKR). Positions 382–386 (VLSKR) match the 'KMSKS' region motif.

It belongs to the class-I aminoacyl-tRNA synthetase family. Glutamate--tRNA ligase type 2 subfamily.

It localises to the cytoplasm. The enzyme catalyses tRNA(Glu) + L-glutamate + ATP = L-glutamyl-tRNA(Glu) + AMP + diphosphate. In Encephalitozoon cuniculi (strain GB-M1) (Microsporidian parasite), this protein is Probable glutamate--tRNA ligase, cytoplasmic.